The following is a 186-amino-acid chain: Probable nicotinate-nucleotide adenylyltransferase (186 aa).

Belongs to the NadD family.

The enzyme catalyses nicotinate beta-D-ribonucleotide + ATP + H(+) = deamido-NAD(+) + diphosphate. It functions in the pathway cofactor biosynthesis; NAD(+) biosynthesis; deamido-NAD(+) from nicotinate D-ribonucleotide: step 1/1. Its function is as follows. Catalyzes the reversible adenylation of nicotinate mononucleotide (NaMN) to nicotinic acid adenine dinucleotide (NaAD). This Tropheryma whipplei (strain TW08/27) (Whipple's bacillus) protein is Probable nicotinate-nucleotide adenylyltransferase.